We begin with the raw amino-acid sequence, 424 residues long: Arogenate dehydratase 1 (424 aa).

Residues 1 to 52 (MQSLTPSSGVNLKSIIRKTSLPPGQTRFITGRVIKCGYQVDSANTVNTAGAP) constitute a chloroplast transit peptide. Positions 131–308 (RVAYQGVPGA…NVTRFVMLAR (178 aa)) constitute a Prephenate dehydratase domain. The 92-residue stretch at 321–412 (TSIVFAHEGT…SFLRVLGSYP (92 aa)) folds into the ACT domain.

In terms of tissue distribution, mostly expressed in flowers, especially in petals (corollas and tubes), and, at low levels, in roots, stems, leaves, pistils, stamens, ovaries and sepals.

It is found in the plastid. It localises to the chloroplast stroma. The catalysed reaction is L-arogenate + H(+) = L-phenylalanine + CO2 + H2O. It participates in amino-acid biosynthesis; L-phenylalanine biosynthesis; L-phenylalanine from L-arogenate: step 1/1. In terms of biological role, converts L-arogenate produced from the shikimate-chorismate pathway into phenylalanine (Phe). Involved in floral volatile benzenoids and phenylpropanoids (FVBP) production. The sequence is that of Arogenate dehydratase 1 from Petunia hybrida (Petunia).